Here is a 161-residue protein sequence, read N- to C-terminus: Ferric uptake regulation protein 1 (161 aa).

Zn(2+) contacts are provided by cysteine 94 and cysteine 97.

It belongs to the Fur family.

It localises to the cytoplasm. Its function is as follows. Acts as a global negative controlling element, employing Fe(2+) as a cofactor to bind the operator of the repressed genes. The sequence is that of Ferric uptake regulation protein 1 (fur1) from Mycolicibacterium fortuitum (Mycobacterium fortuitum).